The chain runs to 349 residues: KH domain-containing, RNA-binding, signal transduction-associated protein 2 (349 aa).

Residues 65–135 enclose the KH domain; that stretch reads LIPVKQYPKF…HLSDELHVLI (71 aa). 2 disordered regions span residues 181 to 263 and 321 to 349; these read SEES…PPPA and EWAT…YGRY. The span at 218 to 231 shows a compositional bias: low complexity; sequence RGVLTPRGTTVTRG. Omega-N-methylarginine occurs at positions 230 and 240. Residues 340 to 349 show a composition bias toward basic and acidic residues; sequence GYREHPYGRY.

This sequence belongs to the KHDRBS family. In terms of assembly, self-associates to form homooligomers. Interacts with KHDRBS1/SAM68; heterooligomer formation of KHDRBS family proteins may modulate RNA substrate specificity. Interacts with RBMX, SAFB, SFRS9 and YTHDC1. Interacts with FYN and PLCG1 (via SH3 domain). Interacts (phosphorylated) with FYN, GRB2, PLCG1 and RASA1 (via SH2 domain). Post-translationally, methylated. In terms of processing, tyrosine phosphorylated by FYN, PTK6 and SRC. Tyrosine phosphorylated by SRC during mitosis. In terms of tissue distribution, expressed in heart, skin, brain, colon, spleen, kidney, cervix and testis. In adult cerebellum expressed predominantly in Purkinje cells and in the hippocampus is abundantly expressed in glutamatergic dentate granule cells and in specific inhibitory Schaffer collateral-associated and path-associated interneurons; expression is restricted to neuronal subpopulations largely non-overlapping with expression of KHDRBS3/SLM-2 (at protein level).

The protein resides in the nucleus. Functionally, RNA-binding protein that plays a role in the regulation of alternative splicing and influences mRNA splice site selection and exon inclusion. Binds both poly(A) and poly(U) homopolymers. Phosphorylation by PTK6 inhibits its RNA-binding ability. Induces an increased concentration-dependent incorporation of exon in CD44 pre-mRNA by direct binding to purine-rich exonic enhancer. Can regulate alternative splicing of neurexins NRXN1-3 in the laminin G-like domain 6 containing the evolutionary conserved neurexin alternative spliced segment 4 (AS4) involved in neurexin selective targeting to postsynaptic partners. Regulates cell-type specific alternative splicing of NRXN1 at AS4 and acts synergystically with SAM68 in exon skipping. In contrast acts antagonistically with SAM68 in NRXN3 exon skipping at AS4. Its phosphorylation by FYN inhibits its ability to regulate splice site selection. May function as an adapter protein for Src kinases during mitosis. The chain is KH domain-containing, RNA-binding, signal transduction-associated protein 2 (Khdrbs2) from Mus musculus (Mouse).